A 344-amino-acid polypeptide reads, in one-letter code: C-C chemokine receptor-like 2 (344 aa).

At 1–43 the chain is on the extracellular side; the sequence is MANYTLAPEDEYDVLIEGELESDEAEQCDRYDTWALSAQLVPS. An N-linked (GlcNAc...) asparagine glycan is attached at Asn3. A helical transmembrane segment spans residues 44 to 64; the sequence is LCSAVFVVGVLDNLLVVLILV. Residues 65-74 lie on the Cytoplasmic side of the membrane; sequence KYKGLKRVEN. The helical transmembrane segment at 75-95 threads the bilayer; the sequence is IYLLNLAVSNLCFLLTLPFWA. Residues 96 to 104 are Extracellular-facing; that stretch reads HAGGDPMCK. An intrachain disulfide couples Cys103 to Cys181. Residues 105–125 form a helical membrane-spanning segment; the sequence is ILIGLYFVGLYSETFFNCLLT. The Cytoplasmic portion of the chain corresponds to 126-148; that stretch reads LQRYLVFLHKGNFFSVRRRVPCG. Residues 149 to 169 traverse the membrane as a helical segment; sequence IVTSAVAWVTAILATVPEFAV. Residues 170–198 lie on the Extracellular side of the membrane; it reads YKPQMEDPKYKCAFSRTPFLPADETFWKH. Residues 199–219 form a helical membrane-spanning segment; it reads FLTLKMNVSVLVFPLFIFTFL. The Cytoplasmic segment spans residues 220–238; it reads YVQMRKTLRFGEQRYSLFK. The helical transmembrane segment at 239–259 threads the bilayer; that stretch reads LVFAIMVVFLLMWAPYNIALF. Residues 260–281 lie on the Extracellular side of the membrane; the sequence is LSTFKEHFSLSDCKSNYNLDKS. The chain crosses the membrane as a helical span at residues 282–302; the sequence is VLITKLIATTHCCVNPLLYVF. The Cytoplasmic portion of the chain corresponds to 303 to 344; the sequence is LDGTFRKYLCRFFHRRSNTPRQPRRRFAQGTSREEPDRSTEV. A disordered region spans residues 323 to 344; the sequence is RQPRRRFAQGTSREEPDRSTEV. Residues 334 to 344 are compositionally biased toward basic and acidic residues; it reads SREEPDRSTEV.

Belongs to the G-protein coupled receptor 1 family.

The protein localises to the cell membrane. Functionally, receptor for CCL19 and chemerin/RARRES2. Does not appear to be a signaling receptor, but may have a role in modulating chemokine-triggered immune responses by capturing and internalizing CCL19 or by presenting RARRES2 ligand to CMKLR1, a functional signaling receptor. Plays a critical role for the development of Th2 responses. The sequence is that of C-C chemokine receptor-like 2 (CCRL2) from Macaca mulatta (Rhesus macaque).